We begin with the raw amino-acid sequence, 213 residues long: 3-isopropylmalate dehydratase small subunit (213 aa).

This sequence belongs to the LeuD family. LeuD type 1 subfamily. As to quaternary structure, heterodimer of LeuC and LeuD.

The catalysed reaction is (2R,3S)-3-isopropylmalate = (2S)-2-isopropylmalate. It functions in the pathway amino-acid biosynthesis; L-leucine biosynthesis; L-leucine from 3-methyl-2-oxobutanoate: step 2/4. Catalyzes the isomerization between 2-isopropylmalate and 3-isopropylmalate, via the formation of 2-isopropylmaleate. This Pseudomonas savastanoi pv. phaseolicola (strain 1448A / Race 6) (Pseudomonas syringae pv. phaseolicola (strain 1448A / Race 6)) protein is 3-isopropylmalate dehydratase small subunit.